The following is a 191-amino-acid chain: C-type lectin domain family 2 member D (191 aa).

The Cytoplasmic segment spans residues 1–38 (MHDSNNVEKDITPSELPANPGCLHSKEHSIKATLIWRL). The chain crosses the membrane as a helical; Signal-anchor for type II membrane protein span at residues 39-59 (FFLIMFLTIIVCGMVAALSAI). The Extracellular segment spans residues 60-191 (RANCHQEPSV…WICSKSDIHV (132 aa)). Cys75 and Cys86 are oxidised to a cystine. In terms of domain architecture, C-type lectin spans 82-185 (FQRKCFYFSD…HYTERKWICS (104 aa)). Residues Asn95 and Asn147 are each glycosylated (N-linked (GlcNAc...) asparagine). A disulfide bond links Cys103 and Cys184.

Homodimer; disulfide-linked. N-glycosylated. Detected in peripheral blood leukocytes, osteoblasts, lymph node, thymus and spleen. Isoform 1, isoform 2 and isoform 4 are expressed in T- and B-lymphocytes, and at lower levels in NK cells. They are also expressed in B-cell lines and LPS-matured monocyte-derived dendritic cells.

The protein localises to the cell membrane. Its subcellular location is the endoplasmic reticulum. In terms of biological role, receptor for KLRB1 that protects target cells against natural killer cell-mediated lysis. Inhibits osteoclast formation. Inhibits bone resorption. Modulates the release of interferon-gamma. Binds high molecular weight sulfated glycosaminoglycans. This Homo sapiens (Human) protein is C-type lectin domain family 2 member D (CLEC2D).